Consider the following 189-residue polypeptide: Large ribosomal subunit protein bL17 (189 aa).

A disordered region spans residues 136–189 (KAAPAAEEEVVETEEAPAVEAEAAESEEAPAAEAEAAEAEAAETEEAPAAEDKK). The span at 141–189 (AEEEVVETEEAPAVEAEAAESEEAPAAEAEAAEAEAAETEEAPAAEDKK) shows a compositional bias: acidic residues.

This sequence belongs to the bacterial ribosomal protein bL17 family. In terms of assembly, part of the 50S ribosomal subunit. Contacts protein L32.

The polypeptide is Large ribosomal subunit protein bL17 (Paenarthrobacter aurescens (strain TC1)).